The primary structure comprises 807 residues: Mechanosensitive cation channel TMEM63A (807 aa).

The Extracellular portion of the chain corresponds to 1–51 (MMDSPFLELWQSKAVSIREQLGLGDRPNDSYCYNSAKNSTVLQGVTFGGIP). Asn-38 carries an N-linked (GlcNAc...) asparagine glycan. A helical membrane pass occupies residues 52–74 (TVLLIDVSCFLFLILVFSIIRRR). The Cytoplasmic portion of the chain corresponds to 75–134 (FWDYGRIALVSEADSESRFQRLSSTSSSGQQDFENELGCCPWLTAIFRLHDDQILEWCGE). The helical transmembrane segment at 135 to 167 (DAIHYLSFQRHIIFLLVVVSFLSLCVILPVNLS) threads the bilayer. At 168–191 (GDLLDKDPYSFGRTTIANLQTDND) the chain is on the extracellular side. The chain crosses the membrane as a helical span at residues 192–217 (LLWLHTIFAVIYLFLTVGFMRHHTQS). Residues 218–416 (IKYKEENLVR…CWKNLSIQGL (199 aa)) lie on the Cytoplasmic side of the membrane. The segment at 219–414 (KYKEENLVRR…DICWKNLSIQ (196 aa)) is intracellular linker IL2; confers mechanosensitivity. The chain crosses the membrane as a helical span at residues 417–444 (RWWLQWLGINFTLFLGLFFLTTPSIILS). Topologically, residues 445–462 (TMDKFNVTKPIHALNNPI) are extracellular. Residue Asn-450 is glycosylated (N-linked (GlcNAc...) asparagine). Residues 463–490 (ISQFFPTLLLWSFSALLPSIVYYSTLLE) traverse the membrane as a helical segment. Over 491 to 495 (SHWTK) the chain is Cytoplasmic. The chain crosses the membrane as a helical span at residues 496–532 (SGENQIMMTKVYIFLIFMVLILPSLGLTSLDFFFRWL). The Extracellular segment spans residues 533–554 (FDKTSSEASIRLECVFLPDQGA). A helical transmembrane segment spans residues 555-586 (FFVNYVIASAFIGNGMELLRLPGLILYTFRMI). Positions 555–586 (FFVNYVIASAFIGNGMELLRLPGLILYTFRMI) are gating helix. At 587-606 (MAKTAADRRNVKQNQAFQYE) the chain is on the cytoplasmic side. A helical transmembrane segment spans residues 607–624 (FGAMYAWMLCVFTVIVAY). Topologically, residues 625-628 (SITC) are extracellular. Residues 629–651 (PIIAPFGLIYILLKHMVDRHNLY) traverse the membrane as a helical segment. Over 652 to 661 (FVYLPAKLEK) the chain is Cytoplasmic. A helical membrane pass occupies residues 662-689 (GIHFAAVNQALAAPILCLFWLYFFSFLR). Topologically, residues 690–694 (LGMKA) are extracellular. A helical transmembrane segment spans residues 695 to 709 (PATLFTFLVLLLTIL). Topologically, residues 710–807 (VCLAHTCFGC…GSVAAAPQEA (98 aa)) are cytoplasmic. The residue at position 739 (Ser-739) is a Phosphoserine.

This sequence belongs to the CSC1 (TC 1.A.17) family. As to quaternary structure, monomer. N-Glycosylated.

It localises to the lysosome membrane. The protein resides in the early endosome membrane. Its subcellular location is the cell membrane. It catalyses the reaction Ca(2+)(in) = Ca(2+)(out). Functionally, mechanosensitive cation channel with low conductance and high activation threshold. In contrast to TMEM63B, does not show phospholipid scramblase activity. Acts as a regulator of lysosomal morphology by mediating lysosomal mechanosensitivity. Important for the baby's first breath and respiration throughout life. Upon lung inflation conducts cation currents in alveolar type 1 and 2 cells triggering lamellar body exocytosis and surfactant secretion into airspace. Also acts as an osmosensitive cation channel preferentially activated by hypotonic stress. The protein is Mechanosensitive cation channel TMEM63A of Homo sapiens (Human).